The primary structure comprises 268 residues: Ribosomal RNA small subunit methyltransferase A (268 aa).

S-adenosyl-L-methionine-binding residues include Asn17, Leu19, Gly44, Glu65, Asp89, and Asn110.

Belongs to the class I-like SAM-binding methyltransferase superfamily. rRNA adenine N(6)-methyltransferase family. RsmA subfamily.

The protein localises to the cytoplasm. The catalysed reaction is adenosine(1518)/adenosine(1519) in 16S rRNA + 4 S-adenosyl-L-methionine = N(6)-dimethyladenosine(1518)/N(6)-dimethyladenosine(1519) in 16S rRNA + 4 S-adenosyl-L-homocysteine + 4 H(+). In terms of biological role, specifically dimethylates two adjacent adenosines (A1518 and A1519) in the loop of a conserved hairpin near the 3'-end of 16S rRNA in the 30S particle. May play a critical role in biogenesis of 30S subunits. In Acidithiobacillus ferrooxidans (strain ATCC 53993 / BNL-5-31) (Leptospirillum ferrooxidans (ATCC 53993)), this protein is Ribosomal RNA small subunit methyltransferase A.